The primary structure comprises 203 residues: SPbeta prophage-derived uncharacterized protein YouA (203 aa).

Residues 1–23 (MAFLNQDGDKYTSAKDDGTGNPI) are disordered. Positions 7-18 (DGDKYTSAKDDG) are enriched in basic and acidic residues.

The chain is SPbeta prophage-derived uncharacterized protein YouA (youA) from Bacillus subtilis (strain 168).